Reading from the N-terminus, the 143-residue chain is uncharacterized protein (143 aa).

It to E.coli YifN.

This is an uncharacterized protein from Haemophilus influenzae (strain ATCC 51907 / DSM 11121 / KW20 / Rd).